Here is a 367-residue protein sequence, read N- to C-terminus: tRNA-specific 2-thiouridylase MnmA (367 aa).

Residues 12-19 and Met-38 each bind ATP; that span reads GMSGGVDS. The tract at residues 98–100 is interaction with target base in tRNA; it reads NPD. The active-site Nucleophile is Cys-103. A disulfide bond links Cys-103 and Cys-200. Residue Gly-128 coordinates ATP. The interval 150–152 is interaction with tRNA; sequence KDQ. Cys-200 acts as the Cysteine persulfide intermediate in catalysis. The tract at residues 312-313 is interaction with tRNA; it reads RY.

It belongs to the MnmA/TRMU family. In terms of assembly, interacts with TusE.

The protein resides in the cytoplasm. It catalyses the reaction S-sulfanyl-L-cysteinyl-[protein] + uridine(34) in tRNA + AH2 + ATP = 2-thiouridine(34) in tRNA + L-cysteinyl-[protein] + A + AMP + diphosphate + H(+). In terms of biological role, catalyzes the 2-thiolation of uridine at the wobble position (U34) of tRNA(Lys), tRNA(Glu) and tRNA(Gln), leading to the formation of s(2)U34, the first step of tRNA-mnm(5)s(2)U34 synthesis. Sulfur is provided by IscS, via a sulfur-relay system. Binds ATP and its substrate tRNAs. In Photorhabdus laumondii subsp. laumondii (strain DSM 15139 / CIP 105565 / TT01) (Photorhabdus luminescens subsp. laumondii), this protein is tRNA-specific 2-thiouridylase MnmA.